A 243-amino-acid polypeptide reads, in one-letter code: Pyridoxine 5'-phosphate synthase (243 aa).

N9 is a binding site for 3-amino-2-oxopropyl phosphate. A 1-deoxy-D-xylulose 5-phosphate-binding site is contributed by 11 to 12; the sequence is DH. R20 lines the 3-amino-2-oxopropyl phosphate pocket. H45 serves as the catalytic Proton acceptor. 1-deoxy-D-xylulose 5-phosphate contacts are provided by R47 and H52. Residue E72 is the Proton acceptor of the active site. T102 contacts 1-deoxy-D-xylulose 5-phosphate. H193 serves as the catalytic Proton donor. 3-amino-2-oxopropyl phosphate is bound by residues G194 and 215–216; that span reads GH.

This sequence belongs to the PNP synthase family. As to quaternary structure, homooctamer; tetramer of dimers.

It localises to the cytoplasm. The enzyme catalyses 3-amino-2-oxopropyl phosphate + 1-deoxy-D-xylulose 5-phosphate = pyridoxine 5'-phosphate + phosphate + 2 H2O + H(+). The protein operates within cofactor biosynthesis; pyridoxine 5'-phosphate biosynthesis; pyridoxine 5'-phosphate from D-erythrose 4-phosphate: step 5/5. Catalyzes the complicated ring closure reaction between the two acyclic compounds 1-deoxy-D-xylulose-5-phosphate (DXP) and 3-amino-2-oxopropyl phosphate (1-amino-acetone-3-phosphate or AAP) to form pyridoxine 5'-phosphate (PNP) and inorganic phosphate. The polypeptide is Pyridoxine 5'-phosphate synthase (Vibrio vulnificus (strain CMCP6)).